A 432-amino-acid polypeptide reads, in one-letter code: Glutamate-1-semialdehyde 2,1-aminomutase (432 aa).

The residue at position 271 (Lys271) is an N6-(pyridoxal phosphate)lysine.

This sequence belongs to the class-III pyridoxal-phosphate-dependent aminotransferase family. HemL subfamily. Homodimer. The cofactor is pyridoxal 5'-phosphate.

It is found in the cytoplasm. It carries out the reaction (S)-4-amino-5-oxopentanoate = 5-aminolevulinate. It participates in porphyrin-containing compound metabolism; protoporphyrin-IX biosynthesis; 5-aminolevulinate from L-glutamyl-tRNA(Glu): step 2/2. The polypeptide is Glutamate-1-semialdehyde 2,1-aminomutase (Protochlamydia amoebophila (strain UWE25)).